The following is a 388-amino-acid chain: Quinolone resistance protein NorA (388 aa).

12 helical membrane-spanning segments follow: residues 5–25 (IFVLYFNIFLIFLGIGLVIPV), 42–62 (LLVAAFALSQMIISPFGGTLA), 69–89 (LIICIGLILFSVSEFMFAVGH), 99–119 (VIGGMSAGMVMPGVTGLIADI), 129–149 (FGYMSAIINSGFILGPGIGGF), 157–177 (MPFYFAGALGILAFIMSIVLI), 201–221 (WKVFITPVILTLVLSLGLSAF), 239–259 (DISIAITGGGIFGALFQIYFF), 269–289 (LTFIAWSLLYSVVVLILLVFA), 293–313 (WSIMLISFVVFIGFDMIRPAI), 331–351 (LNSTFTSMGNFIGPLIAGALF), and 355–375 (IEAPIYMAIGVSLAGVVIVLI).

The protein belongs to the major facilitator superfamily. TCR/Tet family.

The protein localises to the cell membrane. Its function is as follows. Involved in quinolone resistance. May constitute a membrane-associated active efflux pump of hydrophilic quinolones. The protein is Quinolone resistance protein NorA (norA) of Staphylococcus aureus (strain MSSA476).